The chain runs to 282 residues: uncharacterized protein (282 aa).

This is an uncharacterized protein from Mycoplasma pneumoniae (strain ATCC 29342 / M129 / Subtype 1) (Mycoplasmoides pneumoniae).